We begin with the raw amino-acid sequence, 289 residues long: Probable prolyl 4-hydroxylase 10 (289 aa).

A helical; Signal-anchor for type II membrane protein transmembrane segment spans residues 20 to 40 (LVFAVLIMSTFVILILLAFGI). Residues 41–289 (LSVPSNNAGS…KWLRVHEYKV (249 aa)) lie on the Lumenal side of the membrane. The Fe2OG dioxygenase domain occupies 161–284 (HGEGLQVLHY…KWSSTKWLRV (124 aa)). The Fe cation site is built by His179 and Asp181. Residue Asn220 is glycosylated (N-linked (GlcNAc...) asparagine). Position 265 (His265) interacts with Fe cation. Lys275 lines the 2-oxoglutarate pocket.

It belongs to the P4HA family. It depends on Fe(2+) as a cofactor. L-ascorbate serves as cofactor.

It localises to the endoplasmic reticulum membrane. It catalyses the reaction L-prolyl-[collagen] + 2-oxoglutarate + O2 = trans-4-hydroxy-L-prolyl-[collagen] + succinate + CO2. In terms of biological role, catalyzes the post-translational formation of 4-hydroxyproline in -Xaa-Pro-Gly- sequences in proline-rich peptide sequences of plant glycoproteins and other proteins. Hydroxyprolines are important constituent of many plant cell wall glycoproteins such as extensins, hydroxyproline-rich glycoproteins, lectins and arabinogalactan proteins. The polypeptide is Probable prolyl 4-hydroxylase 10 (Arabidopsis thaliana (Mouse-ear cress)).